The following is a 347-amino-acid chain: Selenide, water dikinase (347 aa).

U17 is an active-site residue. Residue U17 is a non-standard amino acid, selenocysteine. Residues K20 and 48–50 each bind ATP; that span reads TAD. D51 lines the Mg(2+) pocket. ATP is bound by residues D68, D91, and 139–141; that span reads GHS. Position 91 (D91) interacts with Mg(2+). D227 is a Mg(2+) binding site.

Belongs to the selenophosphate synthase 1 family. Class I subfamily. As to quaternary structure, homodimer. The cofactor is Mg(2+).

It carries out the reaction hydrogenselenide + ATP + H2O = selenophosphate + AMP + phosphate + 2 H(+). Functionally, synthesizes selenophosphate from selenide and ATP. This chain is Selenide, water dikinase, found in Haemophilus influenzae (strain 86-028NP).